The following is a 456-amino-acid chain: Serine--tRNA ligase (456 aa).

Position 252–254 (252–254 (TSE)) interacts with L-serine. Residues 283–285 (RKE) and Val-299 each bind ATP. Glu-306 provides a ligand contact to L-serine. 370 to 373 (ELVS) serves as a coordination point for ATP. Thr-404 provides a ligand contact to L-serine.

Belongs to the class-II aminoacyl-tRNA synthetase family. Type-1 seryl-tRNA synthetase subfamily. Homodimer. The tRNA molecule binds across the dimer.

The protein localises to the cytoplasm. The enzyme catalyses tRNA(Ser) + L-serine + ATP = L-seryl-tRNA(Ser) + AMP + diphosphate + H(+). It carries out the reaction tRNA(Sec) + L-serine + ATP = L-seryl-tRNA(Sec) + AMP + diphosphate + H(+). The protein operates within aminoacyl-tRNA biosynthesis; selenocysteinyl-tRNA(Sec) biosynthesis; L-seryl-tRNA(Sec) from L-serine and tRNA(Sec): step 1/1. Catalyzes the attachment of serine to tRNA(Ser). Is also able to aminoacylate tRNA(Sec) with serine, to form the misacylated tRNA L-seryl-tRNA(Sec), which will be further converted into selenocysteinyl-tRNA(Sec). This chain is Serine--tRNA ligase, found in Korarchaeum cryptofilum (strain OPF8).